A 344-amino-acid polypeptide reads, in one-letter code: N-acetyl-gamma-glutamyl-phosphate reductase (344 aa).

Cys148 is a catalytic residue.

It belongs to the NAGSA dehydrogenase family. Type 1 subfamily.

It is found in the cytoplasm. It carries out the reaction N-acetyl-L-glutamate 5-semialdehyde + phosphate + NADP(+) = N-acetyl-L-glutamyl 5-phosphate + NADPH + H(+). It functions in the pathway amino-acid biosynthesis; L-arginine biosynthesis; N(2)-acetyl-L-ornithine from L-glutamate: step 3/4. Functionally, catalyzes the NADPH-dependent reduction of N-acetyl-5-glutamyl phosphate to yield N-acetyl-L-glutamate 5-semialdehyde. This is N-acetyl-gamma-glutamyl-phosphate reductase from Geobacillus kaustophilus (strain HTA426).